Consider the following 3084-residue polypeptide: Protein prune homolog 2 (3084 aa).

N-acetylmethionine is present on Met1. A DHH motif motif is present at residues 109-111 (GSH). Disordered stretches follow at residues 394–417 (QPSS…QADG), 430–465 (TIRS…PGFD), 500–536 (ASEQ…PKGL), 672–733 (EQES…QKEE), 811–837 (KNTW…MGQS), 861–907 (EIWG…KATG), 947–1080 (SASN…DDPS), 1224–1316 (NMPS…GQSE), 1338–1395 (SGVN…LEVE), 1502–1543 (MNST…DLHD), 1600–1652 (GFGK…TTKR), 1776–1799 (ETGT…DPDK), 1836–1886 (GELE…GDKS), 1961–1980 (DENG…QENQ), 2071–2196 (ILTH…NPEV), 2410–2782 (MLLS…SHPR), 2797–2816 (QSEG…EIDI), and 2825–2859 (DEAD…AEEE). Residues 501–511 (SEQSQPSSHSA) are compositionally biased toward polar residues. 2 stretches are compositionally biased toward basic and acidic residues: residues 682-696 (PWKD…RRTS) and 723-733 (GNKEAQDQKEE). Composition is skewed to polar residues over residues 811 to 828 (KNTW…SGQE) and 865 to 891 (KNNS…NNSK). Over residues 962 to 975 (TNYSTSDSYTSPTY) the composition is skewed to low complexity. The segment covering 977 to 999 (GDEKEIANKPVDKDNGFEAKDAE) has biased composition (basic and acidic residues). Polar residues predominate over residues 1009 to 1019 (ATSSQQSQRNR). The segment covering 1034–1063 (HTEDKPEGNDAHHPDSDALKTEHAEDKNAS) has biased composition (basic and acidic residues). Positions 1071–1080 (SSPSSYDDPS) are enriched in low complexity. Basic and acidic residues predominate over residues 1248–1261 (SPRHSNGKDSHMLE). The span at 1265-1294 (LSESGGLTSQPVNQDTWGDSQGDTASSVTG) shows a compositional bias: polar residues. Positions 1350 to 1366 (KPRDQEFSSSDAFEHQD) are enriched in basic and acidic residues. The segment covering 1368–1378 (SSASGKISSLS) has biased composition (low complexity). 3 stretches are compositionally biased toward polar residues: residues 1779-1792 (TMDT…STEA), 1854-1869 (PIQN…STNP), and 1965-1980 (CVST…QENQ). Residues 2089 to 2103 (VCHDSEGEQKMEKHT) are compositionally biased toward basic and acidic residues. Residues 2162–2174 (SSKPASSRSSPEP) are compositionally biased toward low complexity. Composition is skewed to basic and acidic residues over residues 2416–2428 (PDHR…ETNI), 2506–2525 (KQTE…EDHQ), and 2535–2553 (SHEK…RENI). The segment covering 2569 to 2584 (PETQLSGTPDTCQSEF) has biased composition (polar residues). The segment covering 2595–2606 (RMSSSSNHESAS) has biased composition (low complexity). Polar residues predominate over residues 2607 to 2617 (LENPAQDQSWM). Residues 2653–2664 (KGPKSQVLERNK) are compositionally biased toward basic and acidic residues. The segment covering 2806-2816 (DNLDSPDEIDI) has biased composition (acidic residues). A compositionally biased stretch (polar residues) spans 2840–2849 (ANKSSGQESE). The 162-residue stretch at 2879-3040 (DMKVIEPYRR…SIIKYDEEKS (162 aa)) folds into the CRAL-TRIO domain.

The protein belongs to the PPase class C family. Prune subfamily.

It is found in the cytoplasm. Functionally, may play an important role in regulating differentiation, survival and aggressiveness of the tumor cells. This chain is Protein prune homolog 2 (Prune2), found in Mus musculus (Mouse).